The chain runs to 1064 residues: Valine--tRNA ligase, mitochondrial (1064 aa).

The N-terminal 26 residues, 1 to 26 (MPHLPLASFRPPFWGLRHSRGLPRFH), are a transit peptide targeting the mitochondrion. The tract at residues 25-65 (FHSVSTQSEPHGSPISRRNREAKQKRLREKQATLETDIAGE) is disordered. Over residues 42 to 56 (RNREAKQKRLREKQA) the composition is skewed to basic and acidic residues. The 'HIGH' region motif lies at 146–156 (PNVTGSLHIGH). The 'KMSKS' region signature appears at 659 to 663 (KMSKS). Position 662 (Lys662) interacts with ATP.

The protein belongs to the class-I aminoacyl-tRNA synthetase family.

The protein localises to the mitochondrion. It carries out the reaction tRNA(Val) + L-valine + ATP = L-valyl-tRNA(Val) + AMP + diphosphate. In terms of biological role, catalyzes the attachment of valine to tRNA(Val) in a two-step reaction: valine is first activated by ATP to form Val-AMP and then transferred to the acceptor end of tRNA(Val). This Macaca mulatta (Rhesus macaque) protein is Valine--tRNA ligase, mitochondrial (VARS2).